A 75-amino-acid polypeptide reads, in one-letter code: Beta-defensin 30 (75 aa).

Positions 1–22 (MGSLQLILVLFVLLSDVPPVRS) are cleaved as a signal peptide. Disulfide bonds link Cys-35–Cys-62, Cys-42–Cys-56, and Cys-46–Cys-63.

Belongs to the beta-defensin family.

It localises to the secreted. Has antibacterial activity. This is Beta-defensin 30 (Defb30) from Rattus norvegicus (Rat).